Reading from the N-terminus, the 851-residue chain is Phosphatidate phosphatase LPIN3 (851 aa).

The interval 1–108 is N-LIP; that stretch reads MNYVGQLAET…VPPGLCTSPI (108 aa). 2 disordered regions span residues 114 to 385 and 400 to 432; these read SGFP…YLDD and QSDS…EPTL. A compositionally biased stretch (basic residues) spans 140–151; that stretch reads GRRKRRRRRKPK. Residues 141–148 carry the Nuclear localization signal motif; sequence RRKRRRRR. Residue Thr-159 is modified to Phosphothreonine. Residues Ser-161, Ser-162, and Ser-224 each carry the phosphoserine modification. Over residues 268–286 the composition is skewed to low complexity; the sequence is GRAGATSPPRGGPSTPSTS. A compositionally biased stretch (basic and acidic residues) spans 418-429; that stretch reads SLRDPNPEHEPE. Position 463 is a phosphoserine (Ser-463). The span at 542–559 shows a compositional bias: basic and acidic residues; the sequence is SAQKEKTAAKEQQGEKTE. The tract at residues 542 to 591 is disordered; that stretch reads SAQKEKTAAKEQQGEKTEVLSSDDDAPDSPVILEIPSLPPSTPPSTPTYK. Residues 578-587 are compositionally biased toward pro residues; it reads SLPPSTPPST. The interval 590-792 is C-LIP; sequence YKKSLRLSSD…RIFTVNPRGE (203 aa). The short motif at 644–648 is the DXDXT motif element; the sequence is DIDGT. Residues 655 to 659 carry the LXXIL motif motif; that stretch reads LGHIL.

This sequence belongs to the lipin family. Mg(2+) serves as cofactor. Significant expression in intestine and other regions of the gastrointestinal tract.

Its subcellular location is the nucleus. The catalysed reaction is a 1,2-diacyl-sn-glycero-3-phosphate + H2O = a 1,2-diacyl-sn-glycerol + phosphate. Inhibited by N-ethylmaleimide. Its function is as follows. Magnesium-dependent phosphatidate phosphatase enzyme which catalyzes the conversion of phosphatidic acid to diacylglycerol during triglyceride, phosphatidylcholine and phosphatidylethanolamine biosynthesis therefore regulates fatty acid metabolism. This is Phosphatidate phosphatase LPIN3 from Homo sapiens (Human).